The primary structure comprises 448 residues: tRNA modification GTPase MnmE (448 aa).

Positions 21, 80, and 119 each coordinate (6S)-5-formyl-5,6,7,8-tetrahydrofolate. The 156-residue stretch at 215 to 370 folds into the TrmE-type G domain; that stretch reads GVKLAIVGRP…LSEEILKKVG (156 aa). K(+) is bound at residue Asn225. GTP-binding positions include 225 to 230, 244 to 250, and 269 to 272; these read NVGKSS, TDIAGTT, and DTAG. Mg(2+) is bound at residue Ser229. 3 residues coordinate K(+): Thr244, Ile246, and Thr249. Residue Thr250 participates in Mg(2+) binding. Residue Lys448 coordinates (6S)-5-formyl-5,6,7,8-tetrahydrofolate.

This sequence belongs to the TRAFAC class TrmE-Era-EngA-EngB-Septin-like GTPase superfamily. TrmE GTPase family. Homodimer. Heterotetramer of two MnmE and two MnmG subunits. K(+) is required as a cofactor.

It localises to the cytoplasm. Its function is as follows. Exhibits a very high intrinsic GTPase hydrolysis rate. Involved in the addition of a carboxymethylaminomethyl (cmnm) group at the wobble position (U34) of certain tRNAs, forming tRNA-cmnm(5)s(2)U34. The polypeptide is tRNA modification GTPase MnmE (Aquifex aeolicus (strain VF5)).